Reading from the N-terminus, the 585-residue chain is Optineurin (585 aa).

The disordered stretch occupies residues 1-32; that stretch reads MSHQPLSCLTEKGDSSCETPGNGPSNMVHPNL. The segment covering 16 to 25 has biased composition (polar residues); that stretch reads SCETPGNGPS. Positions 38–181 form a coiled coil; that stretch reads EELLQQMKEL…VSELQLKLNS (144 aa). The segment at 58–220 is interaction with Rab8; the sequence is MKLNNQAMKG…GPTRTDSISM (163 aa). An LIR motif is present at residues 187–192; it reads DSFVEI. Ser188 and Ser209 each carry phosphoserine. 2 disordered regions span residues 200 to 220 and 269 to 299; these read EGAM…SISM and FEKK…PESV. Residues 244–512 adopt a coiled-coil conformation; the sequence is CLREGNQKVE…LLKENNDFED (269 aa). Position 346 is a phosphoserine (Ser346). Positions 415 to 585 are interaction with HD; sequence TKQQAEKVDK…LQIHVMDCII (171 aa). Residues 416 to 525 form an interaction with MYO6 region; that stretch reads KQQAEKVDKV…RQSLMEMQCR (110 aa). The UBAN signature appears at 478 to 483; it reads DFHAER. Ser531 is modified (phosphoserine). The segment at 555–585 adopts a CCHC NOA-type zinc-finger fold; sequence PRSIPIHSCPKCGEVLPDIDTLQIHVMDCII. The Zn(2+) site is built by Cys563, Cys566, His579, and Cys583.

In terms of assembly, self-associates. Interacts with HD. Interacts with GTF3A. Interacts with MYO6. Interacts (via UBAN) with ubiquitinated TFRC. Interacts with GTP-bound Rab8 (RAB8A and/or RAB8B). Interacts with TBC1D17. Interacts with TBK1. Interacts with TRAF3. Binds to linear ubiquitin chains. Interacts with LC3 family members MAP1LC3A, MAP1LC3B, GABARAP, GABARAPL1 and GABARAPL2; OPTN phosphorylation increases the association (at least with MAP1LC3B). Interacts with RAB12; the interaction may be indirect. Interacts with TBK1; this interaction leads to the Golgi localization of TBK1 and its subsequent activation. Interacts with palmitoyltransferase ZDHHC17/HIP14; the interaction does not lead to palmitoylation of OPTN. Interacts with CYLD. Interacts with TOM1; the interaction is indirect and is mediated by MYO6, which acts as a bridge between TOM1 and OPTN. Interacts with USP12; the interaction is independent of USP12 deubiquitinase activity and may be involved in regulation of autophagic flux. In terms of processing, phosphorylated by TBK1, leading to restrict bacterial proliferation in case of infection.

It localises to the cytoplasm. The protein resides in the perinuclear region. It is found in the golgi apparatus. Its subcellular location is the trans-Golgi network. The protein localises to the cytoplasmic vesicle. It localises to the autophagosome. The protein resides in the recycling endosome. Its function is as follows. Plays an important role in the maintenance of the Golgi complex, in membrane trafficking, in exocytosis, through its interaction with myosin VI and Rab8. Links myosin VI to the Golgi complex and plays an important role in Golgi ribbon formation. Negatively regulates the induction of IFNB in response to RNA virus infection. Plays a neuroprotective role in the eye and optic nerve. Probably part of the TNF-alpha signaling pathway that can shift the equilibrium toward induction of cell death. May act by regulating membrane trafficking and cellular morphogenesis via a complex that contains Rab8 and huntingtin (HD). Mediates the interaction of Rab8 with the probable GTPase-activating protein TBC1D17 during Rab8-mediated endocytic trafficking, such as that of transferrin receptor (TFRC/TfR); regulates Rab8 recruitment to tubules emanating from the endocytic recycling compartment. Autophagy receptor that interacts directly with both the cargo to become degraded and an autophagy modifier of the MAP1 LC3 family; targets ubiquitin-coated bacteria (xenophagy) and appears to function in the same pathway as SQSTM1 and CALCOCO2/NDP52. In Rattus norvegicus (Rat), this protein is Optineurin (Optn).